The sequence spans 811 residues: TLR4 interactor with leucine rich repeats (811 aa).

The signal sequence occupies residues 1–25; that stretch reads MEAARALRLLLVVCGCLALPPLAEP. Positions 26 to 57 constitute an LRRNT domain; that stretch reads VCPERCDCQHPQHLLCTNRGLRVVPKTSSLPS. Residues 26-696 lie on the Extracellular side of the membrane; that stretch reads VCPERCDCQH…AGSRGGVDYQ (671 aa). LRR repeat units follow at residues 61-81, 84-105, 108-129, 132-153, 156-177, 180-201, 204-223, 230-251, 254-275, 278-299, 302-323, and 326-347; these read VLTY…DFHR, QLRR…TFEK, RLEE…TLAP, KLRI…SFEG, SLVK…VFAP, NLLY…AFAQ, KLRF…RHAA, SLSS…IFQH, RLGL…AFWG, ALRE…LLEP, SLEA…TFGH, and RLRE…IFAA. Asn-73 is a glycosylation site (N-linked (GlcNAc...) asparagine). The N-linked (GlcNAc...) asparagine glycan is linked to Asn-209. The region spanning 359-416 is the LRRCT domain; it reads NGWTCDCRLRGLKRWMGDWHSQGRLLTVFVQCRHPPALRGKYLDYLDDQQLQNGSCAD. A disordered region spans residues 484-549; the sequence is LSRRGPGLQQ…PSPAGDPWQR (66 aa). Low complexity-rich tracts occupy residues 492–508 and 530–544; these read QQPS…APQS and PTPT…SPAG. Asn-589 carries an N-linked (GlcNAc...) asparagine glycan. The chain crosses the membrane as a helical span at residues 697-717; sequence LLTLALLTVNALLVLLALAAW. Residues 718–811 lie on the Cytoplasmic side of the membrane; it reads ASRWLRRKLR…EDRLLQRFAD (94 aa). Ser-798 carries the phosphoserine modification.

In terms of assembly, belongs to the lipopolysaccharide (LPS) receptor, a multi-protein complex containing at least CD14, MD-2 and TLR4. Interacts with TLR4; this interaction is greatly enhanced by LPS stimulation. Interacts with LPS. N-glycolysaled. In terms of tissue distribution, highly expressed in the brain, ovary, small intestine and spleen.

It is found in the membrane. Its function is as follows. Component of the TLR4 signaling complex. Mediates the innate immune response to bacterial lipopolysaccharide (LPS) leading to cytokine secretion. The sequence is that of TLR4 interactor with leucine rich repeats (TRIL) from Homo sapiens (Human).